Here is a 740-residue protein sequence, read N- to C-terminus: Polyribonucleotide nucleotidyltransferase (740 aa).

Mg(2+) is bound by residues aspartate 514 and aspartate 520. Residues 580 to 639 enclose the KH domain; sequence PRIITVKIPVDKIGEVIGPKRQMINQIQEDTGAEITIEDDGTIYIGAADGPAAEAARATI. The S1 motif domain maps to 651–723; it reads GERILGSVVK…SRGKLSLIPV (73 aa).

This sequence belongs to the polyribonucleotide nucleotidyltransferase family. As to quaternary structure, homotrimer. Mg(2+) is required as a cofactor.

It is found in the cytoplasm. It carries out the reaction RNA(n+1) + phosphate = RNA(n) + a ribonucleoside 5'-diphosphate. Functionally, involved in mRNA degradation. Catalyzes the phosphorolysis of single-stranded polyribonucleotides processively in the 3'- to 5'-direction. This Streptomyces antibioticus protein is Polyribonucleotide nucleotidyltransferase.